Consider the following 267-residue polypeptide: Phosphate import ATP-binding protein PstB 2 (267 aa).

Positions 21–262 (LSTKDLHVYY…AKLQSTSDYV (242 aa)) constitute an ABC transporter domain. 53 to 60 (GPSGCGKS) lines the ATP pocket.

This sequence belongs to the ABC transporter superfamily. Phosphate importer (TC 3.A.1.7) family. In terms of assembly, the complex is composed of two ATP-binding proteins (PstB), two transmembrane proteins (PstC and PstA) and a solute-binding protein (PstS).

It is found in the cell membrane. The catalysed reaction is phosphate(out) + ATP + H2O = ADP + 2 phosphate(in) + H(+). Its function is as follows. Part of the ABC transporter complex PstSACB involved in phosphate import. Responsible for energy coupling to the transport system. This is Phosphate import ATP-binding protein PstB 2 from Streptococcus mutans serotype c (strain ATCC 700610 / UA159).